The chain runs to 423 residues: Serine--tRNA ligase (423 aa).

L-serine is bound at residue T230 to E232. R261–E263 provides a ligand contact to ATP. E284 is an L-serine binding site. E348 to S351 is a binding site for ATP. Residue S384 participates in L-serine binding.

This sequence belongs to the class-II aminoacyl-tRNA synthetase family. Type-1 seryl-tRNA synthetase subfamily. Homodimer. The tRNA molecule binds across the dimer.

The protein localises to the cytoplasm. It catalyses the reaction tRNA(Ser) + L-serine + ATP = L-seryl-tRNA(Ser) + AMP + diphosphate + H(+). The catalysed reaction is tRNA(Sec) + L-serine + ATP = L-seryl-tRNA(Sec) + AMP + diphosphate + H(+). It functions in the pathway aminoacyl-tRNA biosynthesis; selenocysteinyl-tRNA(Sec) biosynthesis; L-seryl-tRNA(Sec) from L-serine and tRNA(Sec): step 1/1. In terms of biological role, catalyzes the attachment of serine to tRNA(Ser). Is also able to aminoacylate tRNA(Sec) with serine, to form the misacylated tRNA L-seryl-tRNA(Sec), which will be further converted into selenocysteinyl-tRNA(Sec). The polypeptide is Serine--tRNA ligase (Macrococcus caseolyticus (strain JCSC5402) (Macrococcoides caseolyticum)).